Here is a 217-residue protein sequence, read N- to C-terminus: Ribose-5-phosphate isomerase A (217 aa).

Substrate-binding positions include 28 to 31 (TGST), 81 to 84 (DGAD), and 94 to 97 (KGGG). The Proton acceptor role is filled by glutamate 103. Residue lysine 121 coordinates substrate.

It belongs to the ribose 5-phosphate isomerase family. Homodimer.

The catalysed reaction is aldehydo-D-ribose 5-phosphate = D-ribulose 5-phosphate. It participates in carbohydrate degradation; pentose phosphate pathway; D-ribose 5-phosphate from D-ribulose 5-phosphate (non-oxidative stage): step 1/1. Catalyzes the reversible conversion of ribose-5-phosphate to ribulose 5-phosphate. The polypeptide is Ribose-5-phosphate isomerase A (Aeromonas salmonicida (strain A449)).